We begin with the raw amino-acid sequence, 140 residues long: ATP synthase epsilon chain (140 aa).

The protein belongs to the ATPase epsilon chain family. As to quaternary structure, F-type ATPases have 2 components, CF(1) - the catalytic core - and CF(0) - the membrane proton channel. CF(1) has five subunits: alpha(3), beta(3), gamma(1), delta(1), epsilon(1). CF(0) has three main subunits: a, b and c.

The protein localises to the cell inner membrane. Produces ATP from ADP in the presence of a proton gradient across the membrane. In Sodalis glossinidius (strain morsitans), this protein is ATP synthase epsilon chain.